We begin with the raw amino-acid sequence, 233 residues long: DNA repair protein RecO (233 aa).

Belongs to the RecO family.

Its function is as follows. Involved in DNA repair and RecF pathway recombination. The protein is DNA repair protein RecO of Pseudomonas paraeruginosa (strain DSM 24068 / PA7) (Pseudomonas aeruginosa (strain PA7)).